The primary structure comprises 307 residues: tRNA dimethylallyltransferase (307 aa).

Residue 10 to 17 participates in ATP binding; that stretch reads GPTAVGKT. Position 12–17 (12–17) interacts with substrate; sequence TAVGKT. The interval 35–38 is interaction with substrate tRNA; the sequence is DSMQ.

The protein belongs to the IPP transferase family. Monomer. Mg(2+) serves as cofactor.

It catalyses the reaction adenosine(37) in tRNA + dimethylallyl diphosphate = N(6)-dimethylallyladenosine(37) in tRNA + diphosphate. Its function is as follows. Catalyzes the transfer of a dimethylallyl group onto the adenine at position 37 in tRNAs that read codons beginning with uridine, leading to the formation of N6-(dimethylallyl)adenosine (i(6)A). The sequence is that of tRNA dimethylallyltransferase from Ligilactobacillus salivarius (strain UCC118) (Lactobacillus salivarius).